The primary structure comprises 105 residues: Thioredoxin (105 aa).

Residues Val2–Val105 form the Thioredoxin domain. Residue Lys3 is modified to N6-acetyllysine. At Lys8 the chain carries N6-succinyllysine. Residues Cys32 and Cys35 each act as nucleophile in the active site. Residues Cys32 and Cys35 are joined by a disulfide bond. At Lys39 the chain carries N6-acetyllysine. Residues Cys62 and Cys69 each carry the S-nitrosocysteine modification. Position 73 is an S-nitrosocysteine; alternate (Cys73). The residue at position 94 (Lys94) is an N6-acetyllysine; alternate. Lys94 carries the N6-succinyllysine; alternate modification.

Belongs to the thioredoxin family. In terms of assembly, homodimer; disulfide-linked. Interacts with TXNIP through the redox-active site. Interacts with MAP3K5 and CASP3. In case of infection, interacts with S.typhimurium protein slrP. Interacts with APEX1; the interaction stimulates the FOS/JUN AP-1 DNA-binding activity in a redox-dependent manner. In terms of processing, in the fully reduced protein, both Cys-69 and Cys-73 are nitrosylated in response to nitric oxide (NO). When two disulfide bonds are present in the protein, only Cys-73 is nitrosylated. Cys-73 can serve as donor for nitrosylation of target proteins. Post-translationally, in case of infection, ubiquitinated by S.typhimurium protein slrP, leading to its degradation.

The protein localises to the nucleus. It is found in the cytoplasm. It localises to the secreted. Its function is as follows. Participates in various redox reactions through the reversible oxidation of its active center dithiol to a disulfide and catalyzes dithiol-disulfide exchange reactions. Plays a role in the reversible S-nitrosylation of cysteine residues in target proteins, and thereby contributes to the response to intracellular nitric oxide. Nitrosylates the active site Cys of CASP3 in response to nitric oxide (NO), and thereby inhibits caspase-3 activity. Induces the FOS/JUN AP-1 DNA-binding activity in ionizing radiation (IR) cells through its oxidation/reduction status and stimulates AP-1 transcriptional activity. Functionally, ADF augments the expression of the interleukin-2 receptor TAC (IL2R/P55). The chain is Thioredoxin (TXN) from Homo sapiens (Human).